The chain runs to 346 residues: Methylthioribose-1-phosphate isomerase (346 aa).

Residues 46–48, Arg-89, and Gln-196 contribute to the substrate site; that span reads RGA. Catalysis depends on Asp-237, which acts as the Proton donor. Residue 247 to 248 participates in substrate binding; it reads NK.

Belongs to the eIF-2B alpha/beta/delta subunits family. MtnA subfamily.

The catalysed reaction is 5-(methylsulfanyl)-alpha-D-ribose 1-phosphate = 5-(methylsulfanyl)-D-ribulose 1-phosphate. It participates in amino-acid biosynthesis; L-methionine biosynthesis via salvage pathway; L-methionine from S-methyl-5-thio-alpha-D-ribose 1-phosphate: step 1/6. In terms of biological role, catalyzes the interconversion of methylthioribose-1-phosphate (MTR-1-P) into methylthioribulose-1-phosphate (MTRu-1-P). This Geobacter sp. (strain M21) protein is Methylthioribose-1-phosphate isomerase.